The sequence spans 526 residues: Bifunctional purine biosynthesis protein PurH (526 aa).

In terms of domain architecture, MGS-like spans 1–148 (MSLNNIIKNA…KNYKDVIVIV (148 aa)).

The protein belongs to the PurH family.

It catalyses the reaction (6R)-10-formyltetrahydrofolate + 5-amino-1-(5-phospho-beta-D-ribosyl)imidazole-4-carboxamide = 5-formamido-1-(5-phospho-D-ribosyl)imidazole-4-carboxamide + (6S)-5,6,7,8-tetrahydrofolate. The catalysed reaction is IMP + H2O = 5-formamido-1-(5-phospho-D-ribosyl)imidazole-4-carboxamide. The protein operates within purine metabolism; IMP biosynthesis via de novo pathway; 5-formamido-1-(5-phospho-D-ribosyl)imidazole-4-carboxamide from 5-amino-1-(5-phospho-D-ribosyl)imidazole-4-carboxamide (10-formyl THF route): step 1/1. Its pathway is purine metabolism; IMP biosynthesis via de novo pathway; IMP from 5-formamido-1-(5-phospho-D-ribosyl)imidazole-4-carboxamide: step 1/1. This Buchnera aphidicola subsp. Schizaphis graminum (strain Sg) protein is Bifunctional purine biosynthesis protein PurH.